The following is a 158-amino-acid chain: Protein GLUTAMINE DUMPER 1 (158 aa).

The Extracellular portion of the chain corresponds to 1 to 36; it reads MRPLSVQSKFEDVATSTSVNHHGVTPQSPWHSPVPY. A helical membrane pass occupies residues 37-57; sequence LFGGLAAMLGLIAFALLILAC. Residues 58-158 lie on the Cytoplasmic side of the membrane; sequence SYWRLSSSGE…DTGETTTTSH (101 aa). The tract at residues 65–85 is disordered; that stretch reads SGEEDGQNVDEEKESRSGDKA. Residues 66-76 show a composition bias toward acidic residues; that stretch reads GEEDGQNVDEE. The VIMAG signature appears at 96 to 100; it reads VIMAG. The interval 126 to 158 is disordered; sequence ISQEESVAKEEEKMREGEEEKVKDTGETTTTSH. The span at 131–151 shows a compositional bias: basic and acidic residues; that stretch reads SVAKEEEKMREGEEEKVKDTG.

This sequence belongs to the GLUTAMINE DUMPER 1 (TC 9.B.60) family. In terms of assembly, interacts with LOG2. In terms of processing, ubiquitinated by LOG2 (in vitro). Expressed in the vascular tissues and in hydathodes. Expressed in the phloem and xylem (at the protein level).

Its subcellular location is the cell membrane. In terms of biological role, probable subunit of an amino acid transporter involved in the regulation of the amino acid metabolism. Stimulates amino acid export by activating nonselective amino acid facilitators. Required the interaction with the RING-type E3 ubiquitin-protein ligase LOG2 to fulfill its function. Plays a role in the Gln export at hydathodes, at xylem parenchyma into xylem sap and from mesophyll into leaf apoplasm. Acts upstream genes involved in the salicylic acid (SA) pathway and in the geminivirus-host interaction. This chain is Protein GLUTAMINE DUMPER 1 (GDU1), found in Arabidopsis thaliana (Mouse-ear cress).